The sequence spans 91 residues: Small ribosomal subunit protein bS20 (91 aa).

Residues 1–28 form a disordered region; sequence MANTASAEKRNRQAQKRRARNVQVRTGV.

Belongs to the bacterial ribosomal protein bS20 family.

In terms of biological role, binds directly to 16S ribosomal RNA. The chain is Small ribosomal subunit protein bS20 from Anaeromyxobacter dehalogenans (strain 2CP-1 / ATCC BAA-258).